Consider the following 1021-residue polypeptide: Outer capsid protein P3 (1021 aa).

The protein belongs to the phytoreovirus inner capsid protein P3 family. As to quaternary structure, homodimer. Homomultimer.

The protein resides in the virion. The protein localises to the host cytoplasm. Its function is as follows. Capsid protein which self-assembles to form the inner icosahedral capsid with a T=2 symmetry, and consisting of 60 P3 dimers. The polypeptide is Outer capsid protein P3 (Nephotettix cincticeps (Green rice leafhopper)).